Consider the following 387-residue polypeptide: Paralemmin-1 (387 aa).

Met-1 carries the post-translational modification N-acetylmethionine. Residues 7 to 104 adopt a coiled-coil conformation; that stretch reads ETISQQERLQ…IEELENADTL (98 aa). 2 disordered regions span residues 22–78 and 98–133; these read RRRQ…QEDE and LENADTLPAPVKETQVAPSPGPVVPAPCPAQEDRKA. Basic and acidic residues-rich tracts occupy residues 25-41 and 69-78; these read QAEVENRRRQLEDDRRQ and DMRKQMQEDE. At Ser-116 the chain carries Phosphoserine. The span at 116–125 shows a compositional bias: pro residues; the sequence is SPGPVVPAPC. A phosphothreonine mark is found at Thr-142 and Thr-146. Ser-163 bears the Phosphoserine mark. Thr-244 bears the Phosphothreonine mark. Ser-246 is modified (phosphoserine). 2 disordered regions span residues 246–297 and 334–378; these read SEAG…QEPP and AAEP…DMKK. Basic and acidic residues predominate over residues 258-273; it reads GPSEEVVRTTPSRREI. The span at 286–297 shows a compositional bias: low complexity; sequence GPPGIQPGQEPP. Phosphoserine is present on residues Ser-346 and Ser-369. 2 S-palmitoyl cysteine lipidation sites follow: Cys-381 and Cys-383. Cys-384 carries the cysteine methyl ester modification. Cys-384 is lipidated: S-farnesyl cysteine. A propeptide spans 385 to 387 (removed in mature form); it reads SIM.

Belongs to the paralemmin family. As to quaternary structure, interacts with dopamine receptor DRD3. Post-translationally, phosphorylated.

The protein localises to the cell membrane. The protein resides in the cell projection. Its subcellular location is the filopodium membrane. It localises to the axon. It is found in the dendrite. The protein localises to the dendritic spine. The protein resides in the basolateral cell membrane. Its subcellular location is the apicolateral cell membrane. Its function is as follows. Involved in plasma membrane dynamics and cell process formation. Necessary for axonal and dendritic filopodia induction, for dendritic spine maturation and synapse formation in a palmitoylation-dependent manner. This Sus scrofa (Pig) protein is Paralemmin-1 (PALM).